The following is a 382-amino-acid chain: MSSVTGFYIPPISFFGEGALEETADYIKNKDYKKALIVTDPGIAAIGLSGRVQKMLEERGLNVAIYDKTQPNPNIANVTAGLKVLKEQNSEIVVSIGGGSAHDNAKAIALLATNGGEIGDYEGVNQSKKAALPLFAINTTAGTASEMTRFTIISNEEKKIKMAIIDNNVTPAVAVNDPSTMFGLPPALTAATGLDALTHCIEAYVSTASNPITDACALKGIDLINESLVAAYKDGKDKKARTDMCYAEYLAGMAFNNASLGYVHALAHQLGGFYHLPHGVCNAVLLPHVQEANMQCPKAKKRLGEIALHFGASQEDPEETIKALHVLNRTMNIPRNLKELGVKTEDFEILAEHAMHDACHLTNPVQFTKEQVVAIIKKAYEY.

It belongs to the iron-containing alcohol dehydrogenase family. Homodimer. Zn(2+) is required as a cofactor. The cofactor is Fe(2+).

The protein localises to the mitochondrion. The enzyme catalyses a primary alcohol + NAD(+) = an aldehyde + NADH + H(+). It carries out the reaction a secondary alcohol + NAD(+) = a ketone + NADH + H(+). With respect to regulation, inhibited by EDTA. In terms of biological role, reduces acetaldehyde to ethanol during glucose fermentation. Specific for ethanol. Shows drastically reduced activity towards primary alcohols from 4 carbon atoms upward. Isomers of aliphatic alcohol, as well as secondary alcohols and glycerol are not used at all. This chain is Alcohol dehydrogenase 4 (ADH4), found in Saccharomyces cerevisiae (strain YJM789) (Baker's yeast).